Reading from the N-terminus, the 151-residue chain is UPF0251 protein Ctha_0452 (151 aa).

Belongs to the UPF0251 family.

This chain is UPF0251 protein Ctha_0452, found in Chloroherpeton thalassium (strain ATCC 35110 / GB-78).